The chain runs to 189 residues: Glycerol-3-phosphate acyltransferase 1 (189 aa).

5 helical membrane-spanning segments follow: residues 12-32 (MQFL…AYIV), 61-81 (GYFV…VSIA), 88-108 (FTFV…PMLF), 124-144 (IAFD…FYLI), and 164-184 (ILYS…VLIL).

Belongs to the PlsY family. As to quaternary structure, probably interacts with PlsX.

The protein localises to the cell membrane. The enzyme catalyses an acyl phosphate + sn-glycerol 3-phosphate = a 1-acyl-sn-glycero-3-phosphate + phosphate. Its pathway is lipid metabolism; phospholipid metabolism. Functionally, catalyzes the transfer of an acyl group from acyl-phosphate (acyl-PO(4)) to glycerol-3-phosphate (G3P) to form lysophosphatidic acid (LPA). This enzyme utilizes acyl-phosphate as fatty acyl donor, but not acyl-CoA or acyl-ACP. This is Glycerol-3-phosphate acyltransferase 1 from Bacillus anthracis.